The sequence spans 211 residues: Outer-membrane lipoprotein carrier protein (211 aa).

The signal sequence occupies residues 1 to 24 (MNTIKILIGLLGIFLFSLSGIVSA).

This sequence belongs to the LolA family. As to quaternary structure, monomer.

The protein localises to the periplasm. Participates in the translocation of lipoproteins from the inner membrane to the outer membrane. Only forms a complex with a lipoprotein if the residue after the N-terminal Cys is not an aspartate (The Asp acts as a targeting signal to indicate that the lipoprotein should stay in the inner membrane). The protein is Outer-membrane lipoprotein carrier protein of Coxiella burnetii (strain RSA 331 / Henzerling II).